We begin with the raw amino-acid sequence, 413 residues long: Multifunctional CCA protein (413 aa).

The ATP site is built by glycine 8 and arginine 11. The CTP site is built by glycine 8 and arginine 11. 2 residues coordinate Mg(2+): aspartate 21 and aspartate 23. 3 residues coordinate ATP: arginine 91, arginine 143, and arginine 146. The CTP site is built by arginine 91, arginine 143, and arginine 146. One can recognise an HD domain in the interval 232–333 (TGVHVMMVVD…VRLFERSDAL (102 aa)).

This sequence belongs to the tRNA nucleotidyltransferase/poly(A) polymerase family. Bacterial CCA-adding enzyme type 1 subfamily. In terms of assembly, monomer. Can also form homodimers and oligomers. The cofactor is Mg(2+). It depends on Ni(2+) as a cofactor.

It carries out the reaction a tRNA precursor + 2 CTP + ATP = a tRNA with a 3' CCA end + 3 diphosphate. The enzyme catalyses a tRNA with a 3' CCA end + 2 CTP + ATP = a tRNA with a 3' CCACCA end + 3 diphosphate. Its function is as follows. Catalyzes the addition and repair of the essential 3'-terminal CCA sequence in tRNAs without using a nucleic acid template. Adds these three nucleotides in the order of C, C, and A to the tRNA nucleotide-73, using CTP and ATP as substrates and producing inorganic pyrophosphate. tRNA 3'-terminal CCA addition is required both for tRNA processing and repair. Also involved in tRNA surveillance by mediating tandem CCA addition to generate a CCACCA at the 3' terminus of unstable tRNAs. While stable tRNAs receive only 3'-terminal CCA, unstable tRNAs are marked with CCACCA and rapidly degraded. The sequence is that of Multifunctional CCA protein from Burkholderia cenocepacia (strain HI2424).